Here is a 162-residue protein sequence, read N- to C-terminus: Peptide methionine sulfoxide reductase MsrA (162 aa).

Cys16 is a catalytic residue.

The protein belongs to the MsrA Met sulfoxide reductase family.

The catalysed reaction is L-methionyl-[protein] + [thioredoxin]-disulfide + H2O = L-methionyl-(S)-S-oxide-[protein] + [thioredoxin]-dithiol. The enzyme catalyses [thioredoxin]-disulfide + L-methionine + H2O = L-methionine (S)-S-oxide + [thioredoxin]-dithiol. Its function is as follows. Has an important function as a repair enzyme for proteins that have been inactivated by oxidation. Catalyzes the reversible oxidation-reduction of methionine sulfoxide in proteins to methionine. This is Peptide methionine sulfoxide reductase MsrA from Geobacter metallireducens (strain ATCC 53774 / DSM 7210 / GS-15).